The chain runs to 118 residues: UPF0102 protein Bcav_2532 (118 aa).

Belongs to the UPF0102 family.

This Beutenbergia cavernae (strain ATCC BAA-8 / DSM 12333 / CCUG 43141 / JCM 11478 / NBRC 16432 / NCIMB 13614 / HKI 0122) protein is UPF0102 protein Bcav_2532.